The primary structure comprises 218 residues: N-(5'-phosphoribosyl)anthranilate isomerase (218 aa).

This sequence belongs to the TrpF family.

It carries out the reaction N-(5-phospho-beta-D-ribosyl)anthranilate = 1-(2-carboxyphenylamino)-1-deoxy-D-ribulose 5-phosphate. Its pathway is amino-acid biosynthesis; L-tryptophan biosynthesis; L-tryptophan from chorismate: step 3/5. The chain is N-(5'-phosphoribosyl)anthranilate isomerase from Rhodopseudomonas palustris (strain HaA2).